Consider the following 155-residue polypeptide: Cytochrome c-type biogenesis protein CcmE (155 aa).

Topologically, residues 1 to 8 (MNPVRKKR) are cytoplasmic. The chain crosses the membrane as a helical; Signal-anchor for type II membrane protein span at residues 9-29 (LFIVLAILAGVGIAVALALSA). Residues 30 to 155 (LQQNINLFYT…YEGGKQEYAK (126 aa)) are Periplasmic-facing. Residues histidine 124 and tyrosine 128 each contribute to the heme site.

This sequence belongs to the CcmE/CycJ family.

The protein localises to the cell inner membrane. In terms of biological role, heme chaperone required for the biogenesis of c-type cytochromes. Transiently binds heme delivered by CcmC and transfers the heme to apo-cytochromes in a process facilitated by CcmF and CcmH. In Stutzerimonas stutzeri (strain A1501) (Pseudomonas stutzeri), this protein is Cytochrome c-type biogenesis protein CcmE.